Here is a 448-residue protein sequence, read N- to C-terminus: Tubulin beta-1 chain (448 aa).

The GTP site is built by Gln11, Glu69, Ser138, Gly142, Thr143, Gly144, Asn204, and Asn226. Glu69 contributes to the Mg(2+) binding site. Residues Asp427–Glu448 are disordered. Over residues Thr429 to Glu448 the composition is skewed to acidic residues.

It belongs to the tubulin family. In terms of assembly, dimer of alpha and beta chains. A typical microtubule is a hollow water-filled tube with an outer diameter of 25 nm and an inner diameter of 15 nM. Alpha-beta heterodimers associate head-to-tail to form protofilaments running lengthwise along the microtubule wall with the beta-tubulin subunit facing the microtubule plus end conferring a structural polarity. Microtubules usually have 13 protofilaments but different protofilament numbers can be found in some organisms and specialized cells. Mg(2+) serves as cofactor.

It localises to the cytoplasm. The protein localises to the cytoskeleton. Its function is as follows. Tubulin is the major constituent of microtubules, a cylinder consisting of laterally associated linear protofilaments composed of alpha- and beta-tubulin heterodimers. Microtubules grow by the addition of GTP-tubulin dimers to the microtubule end, where a stabilizing cap forms. Below the cap, tubulin dimers are in GDP-bound state, owing to GTPase activity of alpha-tubulin. In Brugia pahangi (Filarial nematode worm), this protein is Tubulin beta-1 chain.